The sequence spans 309 residues: Methionyl-tRNA formyltransferase (309 aa).

109-112 (SLLP) lines the (6S)-5,6,7,8-tetrahydrofolate pocket.

The protein belongs to the Fmt family.

It catalyses the reaction L-methionyl-tRNA(fMet) + (6R)-10-formyltetrahydrofolate = N-formyl-L-methionyl-tRNA(fMet) + (6S)-5,6,7,8-tetrahydrofolate + H(+). Its function is as follows. Attaches a formyl group to the free amino group of methionyl-tRNA(fMet). The formyl group appears to play a dual role in the initiator identity of N-formylmethionyl-tRNA by promoting its recognition by IF2 and preventing the misappropriation of this tRNA by the elongation apparatus. The polypeptide is Methionyl-tRNA formyltransferase (Clostridioides difficile (strain 630) (Peptoclostridium difficile)).